A 143-amino-acid chain; its full sequence is Large ribosomal subunit protein uL13 (143 aa).

This sequence belongs to the universal ribosomal protein uL13 family. In terms of assembly, part of the 50S ribosomal subunit.

This protein is one of the early assembly proteins of the 50S ribosomal subunit, although it is not seen to bind rRNA by itself. It is important during the early stages of 50S assembly. This Coprothermobacter proteolyticus (strain ATCC 35245 / DSM 5265 / OCM 4 / BT) protein is Large ribosomal subunit protein uL13.